The following is a 231-amino-acid chain: Large ribosomal subunit protein uL1 (231 aa).

It belongs to the universal ribosomal protein uL1 family. In terms of assembly, part of the 50S ribosomal subunit.

In terms of biological role, binds directly to 23S rRNA. The L1 stalk is quite mobile in the ribosome, and is involved in E site tRNA release. Its function is as follows. Protein L1 is also a translational repressor protein, it controls the translation of the L11 operon by binding to its mRNA. The protein is Large ribosomal subunit protein uL1 of Ralstonia nicotianae (strain ATCC BAA-1114 / GMI1000) (Ralstonia solanacearum).